The primary structure comprises 283 residues: Eukaryotic translation initiation factor 3 subunit K (283 aa).

Residues 52-263 enclose the PCI domain; sequence YDLLANLAIL…EIKATVIREE (212 aa). The disordered stretch occupies residues 114–135; it reads EATTTDADNAGSLSGDDDDDEV.

The protein belongs to the eIF-3 subunit K family. Component of the eukaryotic translation initiation factor 3 (eIF-3) complex.

The protein resides in the cytoplasm. In terms of biological role, component of the eukaryotic translation initiation factor 3 (eIF-3) complex, which is involved in protein synthesis of a specialized repertoire of mRNAs and, together with other initiation factors, stimulates binding of mRNA and methionyl-tRNAi to the 40S ribosome. The eIF-3 complex specifically targets and initiates translation of a subset of mRNAs involved in cell proliferation. The protein is Eukaryotic translation initiation factor 3 subunit K of Mycosarcoma maydis (Corn smut fungus).